Reading from the N-terminus, the 119-residue chain is Protein TusC (119 aa).

Belongs to the DsrF/TusC family. Heterohexamer, formed by a dimer of trimers. The hexameric TusBCD complex contains 2 copies each of TusB, TusC and TusD. The TusBCD complex interacts with TusE.

Its subcellular location is the cytoplasm. Functionally, part of a sulfur-relay system required for 2-thiolation of 5-methylaminomethyl-2-thiouridine (mnm(5)s(2)U) at tRNA wobble positions. In Shigella dysenteriae serotype 1 (strain Sd197), this protein is Protein TusC.